A 535-amino-acid chain; its full sequence is MASLSLAPVNIFKAGADEERAETARLSSFIGAIAIGDLVKSTLGPKGMDKILLSSGRDASLMVTNDGATILKNIGVDNPAAKVLVDMSRVQDDEVGDGTTSVTVLAAELLREAESLIAKKIHPQTIIAGWREATKAARQALLNSAVDHGSDEVKFRQDLMNIAGTTLSSKLLTHHKDHFTKLAVEAVLRLKGSGNLEAIHVIKKLGGSLADSYLDEGFLLDKKIGVNQPKRIENAKILIANTGMDTDKIKIFGSRVRVDSTAKVAEIEHAEKEKMKEKVERILKHGINCFINRQLIYNYPEQLFGAAGVMAIEHADFVGVERLALVTGGEIASTFDHPELVKLGSCKLIEEVMIGEDKLIHFSGVALGEACTIVLRGATQQILDEAERSLHDALCVLAQTVKDSRTVYGGGCSEMLMAHAVTQLASRTPGKEAVAMESYAKALRMLPTIIADNAGYDSADLVAQLRAAHSEGKTTAGLDMKEGTIGDMSVLGITESFQVKRQVLLSAAEAAEVILRVDNIIKAAPRKRVPDHHPC.

An N-acetylalanine modification is found at Ala2. Ser3 carries the phosphoserine modification. Lys13 carries the N6-acetyllysine modification. Gly44 contributes to the ADP binding site. Gly44 serves as a coordination point for ATP. Ser60 is modified (phosphoserine). Asp97 lines the Mg(2+) pocket. The ADP site is built by Gly98, Thr99, Thr100, and Ser101. ATP contacts are provided by Gly98, Thr99, and Thr100. Lys154 is subject to N6-acetyllysine. 2 residues coordinate ADP: Ser168 and Ser169. Lys181 carries the post-translational modification N6-acetyllysine. Lys248 is covalently cross-linked (Glycyl lysine isopeptide (Lys-Gly) (interchain with G-Cter in SUMO2)). Ser260 is subject to Phosphoserine. The residue at position 261 (Thr261) is a Phosphothreonine. Residues Gly410, Glu495, and Lys500 each coordinate ADP. 2 residues coordinate ATP: Glu495 and Lys500.

It belongs to the TCP-1 chaperonin family. Component of the chaperonin-containing T-complex (TRiC), a hexadecamer composed of two identical back-to-back stacked rings enclosing a protein folding chamber. Each ring is made up of eight different subunits: TCP1/CCT1, CCT2, CCT3, CCT4, CCT5, CCT6A/CCT6, CCT7, CCT8. Interacts with PACRG. Interacts with FLCN. Interacts with DLEC1. Interacts with SVEP1.

The protein localises to the cytoplasm. The enzyme catalyses ATP + H2O = ADP + phosphate + H(+). Functionally, component of the chaperonin-containing T-complex (TRiC), a molecular chaperone complex that assists the folding of actin, tubulin and other proteins upon ATP hydrolysis. The TRiC complex mediates the folding of WRAP53/TCAB1, thereby regulating telomere maintenance. As part of the TRiC complex may play a role in the assembly of BBSome, a complex involved in ciliogenesis regulating transports vesicles to the cilia. The protein is T-complex protein 1 subunit beta (CCT2) of Bos taurus (Bovine).